Reading from the N-terminus, the 761-residue chain is Proton-coupled zinc antiporter SLC30A5 (761 aa).

At M1 the chain carries N-acetylmethionine. Residues 1–29 are Cytoplasmic-facing; the sequence is MEEKYGGDARPGPGGGLGPVDVPSARLTR. Residues 30–46 form a helical membrane-spanning segment; the sequence is YILLLCLTKCLKAVGLF. Residues 47 to 54 are Lumenal-facing; it reads ESYDLLKA. The helical transmembrane segment at 55 to 75 threads the bilayer; sequence VHIVQFIFILKLGTAFFMVLF. The Cytoplasmic portion of the chain corresponds to 76–96; that stretch reads QKPFSSGKPITKHQWIKIFKH. The chain crosses the membrane as a helical span at residues 97–117; sequence AVAGCIISLLWFFGLTLCGPL. Residue R118 is a topological domain, lumenal. Residues 119–139 traverse the membrane as a helical segment; sequence TLLLFEHSDIVVISLLSVLFT. The Cytoplasmic segment spans residues 140–150; sequence SSGGGPAKTRG. Residues 151–171 traverse the membrane as a helical segment; that stretch reads AAFFIIAVICLLLFDNDDLMA. Residues 172–191 are Lumenal-facing; sequence KMAEHPEGHHDSALTHMLYT. The chain crosses the membrane as a helical span at residues 192 to 212; that stretch reads AIAFLGVADHKGGVLLLVLAL. Residues 213-236 are Cytoplasmic-facing; the sequence is CCKVGFHTASRKLSIDVGGAKRLQ. A helical transmembrane segment spans residues 237 to 257; sequence ALSQLVSVFLLCPWVIVLSVT. At 258–264 the chain is on the lumenal side; sequence TESKVES. Residues 265–285 traverse the membrane as a helical segment; the sequence is WFSLIMPFTTVIFFVMILDFY. The Cytoplasmic segment spans residues 286–301; it reads MDSVCSVKMDVSKCAR. Residues 302-322 traverse the membrane as a helical segment; it reads YGSFPIFISALLFGNFWTHPI. The Lumenal segment spans residues 323-340; the sequence is TDQLRAMNRAAHQESTEH. A helical membrane pass occupies residues 341–361; sequence VLSGGVVVSAVFFILSANILS. Residues 362-416 are Cytoplasmic-facing; the sequence is SPSKRGQKGTLIGYSPEGTPLYHFMGDAFQHSSQSVPRFIKDSLKQVLEESDSRQ. Residues 417 to 437 form a helical membrane-spanning segment; that stretch reads IFYFLCLNLLFTFVELFYGVL. Residues 418–636 form a mediates homodimerization with SLC30A6 region; that stretch reads FYFLCLNLLF…VLIFLSVIPL (219 aa). Residues 438-446 lie on the Lumenal side of the membrane; it reads TNSLGLISD. The chain crosses the membrane as a helical span at residues 447-467; it reads GFHMLFDCSALVMGLFAALMS. Zn(2+) is bound by residues H449 and D453. The Cytoplasmic portion of the chain corresponds to 468 to 481; it reads RWKATRIFSYGYGR. A helical transmembrane segment spans residues 482-502; it reads IEILSGFINGLFLIVIAFFVF. At 503 to 518 the chain is on the lumenal side; sequence MESVARLIDPPELDTN. Residues 519–539 form a helical membrane-spanning segment; sequence MLTPVSVGGLIVNLIGICAFS. The his-rich loop; required for zinc transport stretch occupies residues 540–574; the sequence is HAHSHGHGASQGNCHSDHGHSHHAHGHGHDHGHSH. The Cytoplasmic portion of the chain corresponds to 540-588; that stretch reads HAHSHGHGASQGNCHSDHGHSHHAHGHGHDHGHSHGFTGGGMNANMRGV. Residues 549 to 576 are disordered; that stretch reads SQGNCHSDHGHSHHAHGHGHDHGHSHGF. The helical transmembrane segment at 589-609 threads the bilayer; the sequence is FLHVLADTLGSIGVIVSTVLI. Residues H591 and D595 each contribute to the Zn(2+) site. Over 610-613 the chain is Lumenal; sequence EQFG. The chain crosses the membrane as a helical span at residues 614–634; that stretch reads WFIADPLCSLFIAVLIFLSVI. Residues 635 to 761 lie on the Cytoplasmic side of the membrane; it reads PLIKDACQVL…KYCKDGTYIM (127 aa).

The protein belongs to the cation diffusion facilitator (CDF) transporter (TC 2.A.4) family. SLC30A subfamily. As to quaternary structure, heterodimer with SLC30A6/ZNT6; form a functional zinc ion transmembrane transporter. Could homodimerize through the formation of dityrosine bonds upon oxidative stress. In terms of tissue distribution, ubiquitously expressed.

Its subcellular location is the golgi apparatus. It localises to the golgi stack membrane. The protein resides in the cytoplasmic vesicle. It is found in the COPII-coated vesicle membrane. The protein localises to the secretory vesicle membrane. Its subcellular location is the trans-Golgi network membrane. The enzyme catalyses Zn(2+)(in) + 2 H(+)(out) = Zn(2+)(out) + 2 H(+)(in). Functionally, together with SLC30A6 forms a functional proton-coupled zinc ion antiporter mediating zinc entry into the lumen of organelles along the secretory pathway. By contributing to zinc ion homeostasis within the early secretory pathway, regulates the activation and folding of enzymes like alkaline phosphatases and enzymes involved in phosphatidylinositol glycan anchor biosynthesis. Through the transport of zinc into secretory granules of pancreatic beta-cells, plays an important role in the storage and secretion of insulin. The sequence is that of Proton-coupled zinc antiporter SLC30A5 from Mus musculus (Mouse).